The primary structure comprises 336 residues: Coproporphyrin III ferrochelatase (336 aa).

Residues serine 52 and tyrosine 116 each contribute to the Fe-coproporphyrin III site. Fe(2+) is bound by residues histidine 176 and glutamate 259.

The protein belongs to the ferrochelatase family.

It is found in the cytoplasm. The enzyme catalyses Fe-coproporphyrin III + 2 H(+) = coproporphyrin III + Fe(2+). The protein operates within porphyrin-containing compound metabolism; protoheme biosynthesis. Involved in coproporphyrin-dependent heme b biosynthesis. Catalyzes the insertion of ferrous iron into coproporphyrin III to form Fe-coproporphyrin III. This chain is Coproporphyrin III ferrochelatase, found in Mycobacterium leprae (strain Br4923).